Reading from the N-terminus, the 319-residue chain is Acetyl-coenzyme A carboxylase carboxyl transferase subunit alpha (319 aa).

The CoA carboxyltransferase C-terminal domain occupies 39–293; sequence RLQKKSNDLT…KAVLEKQLHE (255 aa).

It belongs to the AccA family. As to quaternary structure, acetyl-CoA carboxylase is a heterohexamer composed of biotin carboxyl carrier protein (AccB), biotin carboxylase (AccC) and two subunits each of ACCase subunit alpha (AccA) and ACCase subunit beta (AccD).

It is found in the cytoplasm. It carries out the reaction N(6)-carboxybiotinyl-L-lysyl-[protein] + acetyl-CoA = N(6)-biotinyl-L-lysyl-[protein] + malonyl-CoA. It functions in the pathway lipid metabolism; malonyl-CoA biosynthesis; malonyl-CoA from acetyl-CoA: step 1/1. Component of the acetyl coenzyme A carboxylase (ACC) complex. First, biotin carboxylase catalyzes the carboxylation of biotin on its carrier protein (BCCP) and then the CO(2) group is transferred by the carboxyltransferase to acetyl-CoA to form malonyl-CoA. In Neisseria meningitidis serogroup C / serotype 2a (strain ATCC 700532 / DSM 15464 / FAM18), this protein is Acetyl-coenzyme A carboxylase carboxyl transferase subunit alpha.